A 156-amino-acid chain; its full sequence is Transcription antitermination protein NusB (156 aa).

Belongs to the NusB family.

Functionally, involved in transcription antitermination. Required for transcription of ribosomal RNA (rRNA) genes. Binds specifically to the boxA antiterminator sequence of the ribosomal RNA (rrn) operons. This Syntrophotalea carbinolica (strain DSM 2380 / NBRC 103641 / GraBd1) (Pelobacter carbinolicus) protein is Transcription antitermination protein NusB.